We begin with the raw amino-acid sequence, 339 residues long: Aspartate carbamoyltransferase catalytic subunit (339 aa).

Positions 69 and 70 each coordinate carbamoyl phosphate. K97 is a binding site for L-aspartate. Carbamoyl phosphate contacts are provided by R119, H149, and Q152. L-aspartate contacts are provided by R182 and R237. Carbamoyl phosphate contacts are provided by G278 and P279.

Belongs to the aspartate/ornithine carbamoyltransferase superfamily. ATCase family. In terms of assembly, heterododecamer (2C3:3R2) of six catalytic PyrB chains organized as two trimers (C3), and six regulatory PyrI chains organized as three dimers (R2).

The enzyme catalyses carbamoyl phosphate + L-aspartate = N-carbamoyl-L-aspartate + phosphate + H(+). The protein operates within pyrimidine metabolism; UMP biosynthesis via de novo pathway; (S)-dihydroorotate from bicarbonate: step 2/3. In terms of biological role, catalyzes the condensation of carbamoyl phosphate and aspartate to form carbamoyl aspartate and inorganic phosphate, the committed step in the de novo pyrimidine nucleotide biosynthesis pathway. In Hydrogenovibrio crunogenus (strain DSM 25203 / XCL-2) (Thiomicrospira crunogena), this protein is Aspartate carbamoyltransferase catalytic subunit.